The following is a 132-amino-acid chain: MGKIFTLAEVAQHNNSKDCWLIINGKVYDVTKFLEDHPGGDDVLLSATGKDATDDFEDIGHSSSAKAMLDEYYVGDIDSSSIPSQVKYTPPKQPLYNPDKTREFVIKLLQFLVPLVILAGAIGIRFYTKSSA.

One can recognise a Cytochrome b5 heme-binding domain in the interval 2-78 (GKIFTLAEVA…LDEYYVGDID (77 aa)). Heme-binding residues include H37 and H61. The helical transmembrane segment at 104-124 (FVIKLLQFLVPLVILAGAIGI) threads the bilayer.

It belongs to the cytochrome b5 family.

The protein resides in the endoplasmic reticulum membrane. Its subcellular location is the microsome membrane. In terms of biological role, membrane bound hemoprotein which function as an electron carrier for several membrane bound oxygenases. This Borago officinalis (Bourrache) protein is Cytochrome b5.